We begin with the raw amino-acid sequence, 64 residues long: Large ribosomal subunit protein bL33c (64 aa).

Belongs to the bacterial ribosomal protein bL33 family.

Its subcellular location is the plastid. The protein localises to the chloroplast. This is Large ribosomal subunit protein bL33c from Phaeodactylum tricornutum (strain CCAP 1055/1).